A 314-amino-acid polypeptide reads, in one-letter code: Ribonuclease Z (314 aa).

Residues histidine 62, histidine 64, aspartate 66, histidine 67, histidine 144, aspartate 215, and histidine 273 each contribute to the Zn(2+) site. The Proton acceptor role is filled by aspartate 66.

Belongs to the RNase Z family. In terms of assembly, homodimer. It depends on Zn(2+) as a cofactor.

It carries out the reaction Endonucleolytic cleavage of RNA, removing extra 3' nucleotides from tRNA precursor, generating 3' termini of tRNAs. A 3'-hydroxy group is left at the tRNA terminus and a 5'-phosphoryl group is left at the trailer molecule.. In terms of biological role, zinc phosphodiesterase, which displays some tRNA 3'-processing endonuclease activity. Probably involved in tRNA maturation, by removing a 3'-trailer from precursor tRNA. The sequence is that of Ribonuclease Z from Prochlorococcus marinus (strain NATL1A).